The chain runs to 634 residues: Fluorothreonine transaldolase (634 aa).

Y67, H221, and H247 together coordinate pyridoxal 5'-phosphate. An N6-(pyridoxal phosphate)lysine modification is found at K248. Position 375 (R375) interacts with pyridoxal 5'-phosphate. Residues T428–P456 are disordered.

This sequence belongs to the SHMT family. It depends on pyridoxal 5'-phosphate as a cofactor.

It carries out the reaction fluoroacetaldehyde + L-threonine = 4-fluoro-L-threonine + acetaldehyde. In terms of biological role, transaldolase that catalyzes the final step in 4-fluorothreonine biosynthesis. Mediates a L-threonine/fluoroaceldehyde to 4-fluoro-L-threonine/acetaldehyde crossover reaction. Can also convert chloroacetaldehyde into 4-chloro-L-threonine. Does not use glycine as a substrate. The polypeptide is Fluorothreonine transaldolase (Streptantibioticus cattleyicolor (Streptomyces cattleya)).